The chain runs to 116 residues: Flagellar transcriptional regulator FlhD (116 aa).

This sequence belongs to the FlhD family. Homodimer; disulfide-linked. Forms a heterohexamer composed of two FlhC and four FlhD subunits. Each FlhC binds a FlhD dimer, forming a heterotrimer, and a hexamer assembles by dimerization of two heterotrimers.

It is found in the cytoplasm. Functions in complex with FlhC as a master transcriptional regulator that regulates transcription of several flagellar and non-flagellar operons by binding to their promoter region. Activates expression of class 2 flagellar genes, including fliA, which is a flagellum-specific sigma factor that turns on the class 3 genes. Also regulates genes whose products function in a variety of physiological pathways. This is Flagellar transcriptional regulator FlhD from Escherichia coli O9:H4 (strain HS).